The chain runs to 977 residues: Myb-like protein I (977 aa).

The disordered stretch occupies residues 1-122 (MMNNQSMVRY…QQQQQQLDKS (122 aa)). Residues 21 to 39 (PSPPVYSPIYRSPPPPPQP) are compositionally biased toward pro residues. Over residues 52–68 (DNSHHQVMDNSDHEQQQ) the composition is skewed to basic and acidic residues. Over residues 75 to 118 (QQQQQQQHHHQQQQQQQHHQQQQQQHHQQQQQHHHQQQQQQQQQ) the composition is skewed to low complexity. The HTH myb-type domain occupies 167 to 222 (EKKKQSRYWTPEEHSRFIEALSKYGHKDVKSISQYVSTRNPTQVRTHAQKYFLRID). The segment at residues 195–218 (VKSISQYVSTRNPTQVRTHAQKYF) is a DNA-binding region (H-T-H motif). Disordered regions lie at residues 229–331 (LESK…SSPL), 422–516 (INNN…SSQP), 531–650 (NNNN…QQQM), 738–853 (LNSN…WPGP), and 872–960 (NYVP…GMNQ). The segment covering 241–252 (KDDDWLREEYND) has biased composition (acidic residues). Positions 254–275 (GSPTQYSSCSNSPTTNSVANPF) are enriched in polar residues. Composition is skewed to low complexity over residues 276–329 (SNSL…GNSS) and 422–504 (INNN…INNN). Residues 505 to 516 (GPNSPNLLSSQP) are compositionally biased toward polar residues. Residues 738 to 754 (LNSNSGNSSPNISSING) are compositionally biased toward low complexity. Residues 783–797 (LSGSPSHSPAQSPHY) are compositionally biased toward polar residues. Composition is skewed to low complexity over residues 798-848 (NLNN…SHSI) and 887-943 (SPHF…GSGS). Positions 944-960 (WHQYQATDSPTGWGMNQ) are enriched in polar residues.

Its subcellular location is the nucleus. This is Myb-like protein I (mybI) from Dictyostelium discoideum (Social amoeba).